Reading from the N-terminus, the 214-residue chain is Pyridoxine/pyridoxamine 5'-phosphate oxidase (214 aa).

Substrate-binding positions include 8 to 11 (RKSY) and Lys67. Residues 62-67 (RVVLLK), 77-78 (YT), Lys84, and Gln106 contribute to the FMN site. Tyr124, Arg128, and Ser132 together coordinate substrate. Residues 141-142 (QS) and Trp186 each bind FMN. Position 192–194 (192–194 (RLH)) interacts with substrate. FMN is bound at residue Arg196.

This sequence belongs to the pyridoxamine 5'-phosphate oxidase family. In terms of assembly, homodimer. It depends on FMN as a cofactor.

It catalyses the reaction pyridoxamine 5'-phosphate + O2 + H2O = pyridoxal 5'-phosphate + H2O2 + NH4(+). It carries out the reaction pyridoxine 5'-phosphate + O2 = pyridoxal 5'-phosphate + H2O2. It functions in the pathway cofactor metabolism; pyridoxal 5'-phosphate salvage; pyridoxal 5'-phosphate from pyridoxamine 5'-phosphate: step 1/1. It participates in cofactor metabolism; pyridoxal 5'-phosphate salvage; pyridoxal 5'-phosphate from pyridoxine 5'-phosphate: step 1/1. Its function is as follows. Catalyzes the oxidation of either pyridoxine 5'-phosphate (PNP) or pyridoxamine 5'-phosphate (PMP) into pyridoxal 5'-phosphate (PLP). This Flavobacterium psychrophilum (strain ATCC 49511 / DSM 21280 / CIP 103535 / JIP02/86) protein is Pyridoxine/pyridoxamine 5'-phosphate oxidase.